Reading from the N-terminus, the 251-residue chain is MSGSNPKAATAGSQAGPGGLVAGKEEKKKAGGGVLNRLKARRQGPPHTPDDGSGAAVTEQELLALDTIRPEHVLRLNRVTENYLCKPEDNVYSIDFTRFKIRDLETGTVLFEIAKPCISDQDQDAEEESVDVDISVGRFVRYQFTPAFLRLRTVGATVEFTVGDRPVTGFRMIERHYFRERLLKTFDFDFGFCIPSSRNTCEHIYEFPQLSEDVIRLMIENPYETRSDSFYFVDNKLVMHNKADYAYNGGQ.

The segment covering 1–13 has biased composition (polar residues); the sequence is MSGSNPKAATAGS. Residues 1 to 56 form a disordered region; that stretch reads MSGSNPKAATAGSQAGPGGLVAGKEEKKKAGGGVLNRLKARRQGPPHTPDDGSGAA. Ser-2 carries the N-acetylserine modification. Lys-24 carries the N6-acetyllysine modification. Tyr-142 serves as a coordination point for tetradecanoate.

It belongs to the PDE6D/unc-119 family. Found in a complex with ARL3, RP2 and UNC119B; RP2 induces hydrolysis of GTP ARL3 in the complex, leading to the release of UNC119B. Interacts with NPHP3 (when myristoylated). Interacts with CYS1 (when myristoylated). Interacts with MACIR; interaction only takes place when UNC119B is not liganded with myristoylated proteins.

The protein localises to the cell projection. It localises to the cilium. Myristoyl-binding protein that acts as a cargo adapter: specifically binds the myristoyl moiety of a subset of N-terminally myristoylated proteins and is required for their localization. Binds myristoylated NPHP3 and plays a key role in localization of NPHP3 to the primary cilium membrane. Does not bind all myristoylated proteins. Probably plays a role in trafficking proteins in photoreceptor cells. This chain is Protein unc-119 homolog B (Unc119b), found in Mus musculus (Mouse).